We begin with the raw amino-acid sequence, 312 residues long: D-alanine--D-alanine ligase (312 aa).

One can recognise an ATP-grasp domain in the interval 108–308; that stretch reads KLVWQQTGIP…YSELVVKVLS (201 aa). ATP is bound at residue 138–193; sequence AAKLGVPLFVKPASEGSSVAVEKVKSADALPAALEEAAKHDKIVIVEKSIEGGGEY. Residues aspartate 262, glutamate 275, and asparagine 277 each contribute to the Mg(2+) site.

This sequence belongs to the D-alanine--D-alanine ligase family. It depends on Mg(2+) as a cofactor. The cofactor is Mn(2+).

It localises to the cytoplasm. It catalyses the reaction 2 D-alanine + ATP = D-alanyl-D-alanine + ADP + phosphate + H(+). It functions in the pathway cell wall biogenesis; peptidoglycan biosynthesis. In terms of biological role, cell wall formation. In Burkholderia pseudomallei (strain 668), this protein is D-alanine--D-alanine ligase.